We begin with the raw amino-acid sequence, 235 residues long: uncharacterized protein (235 aa).

The protein to B.subtilis YncM.

This is an uncharacterized protein from Bacillus subtilis (strain 168).